Consider the following 392-residue polypeptide: Phosphoglycerate kinase (392 aa).

Substrate-binding positions include 21–23, Arg36, 59–62, Arg118, and Arg151; these read DFN and HLGR. Residues Lys202, Glu321, and 347–350 each bind ATP; that span reads GGDS.

Belongs to the phosphoglycerate kinase family. In terms of assembly, monomer.

The protein resides in the cytoplasm. It catalyses the reaction (2R)-3-phosphoglycerate + ATP = (2R)-3-phospho-glyceroyl phosphate + ADP. Its pathway is carbohydrate degradation; glycolysis; pyruvate from D-glyceraldehyde 3-phosphate: step 2/5. This is Phosphoglycerate kinase from Symbiobacterium thermophilum (strain DSM 24528 / JCM 14929 / IAM 14863 / T).